The following is a 227-amino-acid chain: 7-cyano-7-deazaguanine synthase (227 aa).

8 to 18 is an ATP binding site; sequence FSGGQDSTTCL. Zn(2+) contacts are provided by C187, C196, C199, and C202.

The protein belongs to the QueC family. The cofactor is Zn(2+).

It carries out the reaction 7-carboxy-7-deazaguanine + NH4(+) + ATP = 7-cyano-7-deazaguanine + ADP + phosphate + H2O + H(+). It functions in the pathway purine metabolism; 7-cyano-7-deazaguanine biosynthesis. Catalyzes the ATP-dependent conversion of 7-carboxy-7-deazaguanine (CDG) to 7-cyano-7-deazaguanine (preQ(0)). The polypeptide is 7-cyano-7-deazaguanine synthase (Aliivibrio fischeri (strain MJ11) (Vibrio fischeri)).